The following is a 339-amino-acid chain: Anthranilate phosphoribosyltransferase (339 aa).

5-phospho-alpha-D-ribose 1-diphosphate is bound by residues G79, 82–83 (GD), S87, 89–92 (NIST), 107–115 (KHGNRSVSS), and S119. G79 is an anthranilate binding site. S91 contributes to the Mg(2+) binding site. Residue N110 coordinates anthranilate. R165 is a binding site for anthranilate. Residues D224 and E225 each contribute to the Mg(2+) site.

This sequence belongs to the anthranilate phosphoribosyltransferase family. Homodimer. Mg(2+) serves as cofactor.

The catalysed reaction is N-(5-phospho-beta-D-ribosyl)anthranilate + diphosphate = 5-phospho-alpha-D-ribose 1-diphosphate + anthranilate. The protein operates within amino-acid biosynthesis; L-tryptophan biosynthesis; L-tryptophan from chorismate: step 2/5. Catalyzes the transfer of the phosphoribosyl group of 5-phosphorylribose-1-pyrophosphate (PRPP) to anthranilate to yield N-(5'-phosphoribosyl)-anthranilate (PRA). The chain is Anthranilate phosphoribosyltransferase from Exiguobacterium sibiricum (strain DSM 17290 / CCUG 55495 / CIP 109462 / JCM 13490 / 255-15).